Here is a 36-residue protein sequence, read N- to C-terminus: Photosystem I reaction center subunit VIII (36 aa).

Residues 9–29 traverse the membrane as a helical segment; sequence ILVPLVGLIFPAIAMTSLFIY.

The protein belongs to the PsaI family.

The protein resides in the plastid. It localises to the chloroplast thylakoid membrane. Its function is as follows. May help in the organization of the PsaL subunit. This chain is Photosystem I reaction center subunit VIII, found in Tupiella akineta (Green alga).